The following is a 482-amino-acid chain: Probable 2-carboxy-D-arabinitol-1-phosphatase (482 aa).

Residues 1 to 34 (MISLPLTTPILPSRCLLHKTRRQNSTRRRLLIRS) constitute a chloroplast transit peptide. The active-site Tele-phosphohistidine intermediate is His55. Catalysis depends on Glu129, which acts as the Proton donor/acceptor.

This sequence belongs to the phosphoglycerate mutase family.

The protein localises to the plastid. Its subcellular location is the chloroplast stroma. The catalysed reaction is 2-carboxy-D-arabinitol 1-phosphate + H2O = 2-carboxy-D-arabinitol + phosphate. In terms of biological role, phosphoglycerate mutase-like protein lacking PGM activity, but having 2-carboxy-D-arabinitol 1-phosphate (CA1P) phosphatase activity. Prevents the accumulation of D-glycero-2,3-pentodiulose-1,5-bisphosphate (PDBP) a potent inhibitor of ribulose-1,5-bisphosphate carboxylase (RuBisCO). PDBP is produced during the oxidation of ribulose-1,5-bisphosphate, the substrate of RuBisCO. In Arabidopsis thaliana (Mouse-ear cress), this protein is Probable 2-carboxy-D-arabinitol-1-phosphatase.